The primary structure comprises 262 residues: Phosphonates import ATP-binding protein PhnC (262 aa).

Residues 5 to 253 (IRVEKLAKTF…RFDHLYRSIN (249 aa)) form the ABC transporter domain. 37 to 44 (GPSGSGKS) contacts ATP.

This sequence belongs to the ABC transporter superfamily. Phosphonates importer (TC 3.A.1.9.1) family. In terms of assembly, the complex is composed of two ATP-binding proteins (PhnC), two transmembrane proteins (PhnE) and a solute-binding protein (PhnD).

Its subcellular location is the cell inner membrane. The enzyme catalyses phosphonate(out) + ATP + H2O = phosphonate(in) + ADP + phosphate + H(+). Functionally, part of the ABC transporter complex PhnCDE involved in phosphonates import. Responsible for energy coupling to the transport system. The protein is Phosphonates import ATP-binding protein PhnC of Shigella sonnei (strain Ss046).